The following is a 177-amino-acid chain: MVNLWEDMETGPNAPDEIYAVVECLKGERNKYEYDKDIPGVVLDRVLHSNVHYPSDYGFIPQTYYDDEDPFDVLVLVEDQTFPGCVIEARPVALMKMDDDGEQDDKVIAVPVEDPRYDHIEDLDDIPQQTLDEIDEFFATYKNLEAGKEVETLGWEDKQAAKDAIEHAMDLYEENFA.

Residues K31, R45, and Y57 each contribute to the substrate site. Positions 67, 72, and 104 each coordinate Mg(2+). Y141 contacts substrate.

The protein belongs to the PPase family. In terms of assembly, homohexamer. Also forms homotrimers, but the trimeric form is 23% less active than the hexamer. In fact, likely forms a dimer of trimers. Mg(2+) is required as a cofactor.

It localises to the cytoplasm. The enzyme catalyses diphosphate + H2O = 2 phosphate + H(+). With respect to regulation, inhibited by sodium fluoride (NaF) in vitro, similarly to other class A type inorganic pyrophosphatases. In terms of biological role, catalyzes the hydrolysis of inorganic pyrophosphate (PPi) forming two phosphate ions. The hydrolysis of PPi by inorganic pyrophosphatase releases a considerable amount of energy that can drive unfavorable biochemical transformations to completion. Is not active on nucleoside triphosphates (ATP, TTP, GTP, or CTP) or nucleoside diphosphate (ADP). The chain is Inorganic pyrophosphatase from Haloferax volcanii (strain ATCC 29605 / DSM 3757 / JCM 8879 / NBRC 14742 / NCIMB 2012 / VKM B-1768 / DS2) (Halobacterium volcanii).